The primary structure comprises 158 residues: Regulator of sigma D (158 aa).

The protein belongs to the Rsd/AlgQ family. In terms of assembly, interacts with RpoD.

The protein localises to the cytoplasm. Binds RpoD and negatively regulates RpoD-mediated transcription activation by preventing the interaction between the primary sigma factor RpoD with the catalytic core of the RNA polymerase and with promoter DNA. May be involved in replacement of the RNA polymerase sigma subunit from RpoD to RpoS during the transition from exponential growth to the stationary phase. In Escherichia coli (strain UTI89 / UPEC), this protein is Regulator of sigma D.